Consider the following 244-residue polypeptide: 1-(5-phosphoribosyl)-5-[(5-phosphoribosylamino)methylideneamino] imidazole-4-carboxamide isomerase (244 aa).

Asp15 acts as the Proton acceptor in catalysis. Asp136 (proton donor) is an active-site residue.

Belongs to the HisA/HisF family.

Its subcellular location is the cytoplasm. It catalyses the reaction 1-(5-phospho-beta-D-ribosyl)-5-[(5-phospho-beta-D-ribosylamino)methylideneamino]imidazole-4-carboxamide = 5-[(5-phospho-1-deoxy-D-ribulos-1-ylimino)methylamino]-1-(5-phospho-beta-D-ribosyl)imidazole-4-carboxamide. Its pathway is amino-acid biosynthesis; L-histidine biosynthesis; L-histidine from 5-phospho-alpha-D-ribose 1-diphosphate: step 4/9. The polypeptide is 1-(5-phosphoribosyl)-5-[(5-phosphoribosylamino)methylideneamino] imidazole-4-carboxamide isomerase (Dehalococcoides mccartyi (strain CBDB1)).